A 295-amino-acid polypeptide reads, in one-letter code: Putative fused nickel transport protein NikMN (295 aa).

The next 8 helical transmembrane spans lie at 8–28 (LDLS…GYSI), 39–59 (LFGI…PIPG), 70–90 (LAGI…VLTI), 98–118 (GGIT…VFVG), 135–155 (FIAG…EIGI), 175–195 (ALLG…IAAA), 211–231 (LAVI…AELV), and 268–288 (AGTL…GFAL).

Belongs to the CbiM family. NikM subfamily.

Its subcellular location is the cell membrane. Functionally, may be involved in nickel transport. In Archaeoglobus fulgidus (strain ATCC 49558 / DSM 4304 / JCM 9628 / NBRC 100126 / VC-16), this protein is Putative fused nickel transport protein NikMN.